A 155-amino-acid chain; its full sequence is Cytochrome c-type biogenesis protein CcmE (155 aa).

Over 1 to 8 (MHPKRKQR) the chain is Cytoplasmic. The helical; Signal-anchor for type II membrane protein transmembrane segment at 9–29 (LILVLFVVLVSSVGVSLTLYA) threads the bilayer. Topologically, residues 30 to 155 (LNENINLFYP…KTCKGISYDS (126 aa)) are periplasmic. Residues H124 and Y128 each coordinate heme.

It belongs to the CcmE/CycJ family.

Its subcellular location is the cell inner membrane. Its function is as follows. Heme chaperone required for the biogenesis of c-type cytochromes. Transiently binds heme delivered by CcmC and transfers the heme to apo-cytochromes in a process facilitated by CcmF and CcmH. The polypeptide is Cytochrome c-type biogenesis protein CcmE (Teredinibacter turnerae (strain ATCC 39867 / T7901)).